Consider the following 433-residue polypeptide: 3-phosphoshikimate 1-carboxyvinyltransferase (433 aa).

3-phosphoshikimate-binding residues include K20, S21, and R25. K20 is a phosphoenolpyruvate binding site. Phosphoenolpyruvate is bound by residues G92 and R121. Residues S167, S168, Q169, S195, D315, and K342 each coordinate 3-phosphoshikimate. Q169 lines the phosphoenolpyruvate pocket. The active-site Proton acceptor is the D315. Positions 346 and 388 each coordinate phosphoenolpyruvate.

The protein belongs to the EPSP synthase family. In terms of assembly, monomer.

It localises to the cytoplasm. It catalyses the reaction 3-phosphoshikimate + phosphoenolpyruvate = 5-O-(1-carboxyvinyl)-3-phosphoshikimate + phosphate. It participates in metabolic intermediate biosynthesis; chorismate biosynthesis. Its function is as follows. Catalyzes the transfer of the enolpyruvyl moiety of phosphoenolpyruvate (PEP) to the 5-hydroxyl of shikimate-3-phosphate (S3P) to produce enolpyruvyl shikimate-3-phosphate and inorganic phosphate. The polypeptide is 3-phosphoshikimate 1-carboxyvinyltransferase (Methanococcus aeolicus (strain ATCC BAA-1280 / DSM 17508 / OCM 812 / Nankai-3)).